Reading from the N-terminus, the 225-residue chain is Insulin-induced gene 2 protein (225 aa).

The Cytoplasmic portion of the chain corresponds to 1 to 28 (MAEGETESPGPKKCGPYISSVTSQSVNL). A helical transmembrane segment spans residues 29 to 51 (MIRGVVLFFIGVFLALVLNLLQI). Residues 52–70 (QRNVTLFPPDVIASIFSSA) lie on the Lumenal side of the membrane. A helical membrane pass occupies residues 71–88 (WWVPPCCGTASAVIGLLY). The Cytoplasmic portion of the chain corresponds to 89-103 (PCIDRHLGEPHKFKR). A helical transmembrane segment spans residues 104–126 (EWSSVMRCVAVFVGINHASAKVD). The Lumenal portion of the chain corresponds to 127–129 (FDN). The chain crosses the membrane as a helical span at residues 130–148 (NIQLSLTLAALSIGLWWTF). The Cytoplasmic segment spans residues 149–153 (DRSRS). Serine 151 carries the post-translational modification Phosphoserine. A helical membrane pass occupies residues 154 to 175 (GFGLGVGIAFLATLVTQLLVYN). Over 176 to 189 (GVYQYTSPDFLYVR) the chain is Lumenal. A helical transmembrane segment spans residues 190-207 (SWLPCIFFAGGITMGNIG). At 208 to 225 (RQLAMYECKVIAEKSHQE) the chain is on the cytoplasmic side. A Cysteine sulfenic acid (-SOH); alternate modification is found at cysteine 215. A Glycyl cysteine thioester (Cys-Gly) (interchain with G-Cter in ubiquitin); alternate cross-link involves residue cysteine 215. The KxHxx motif lies at 219–225 (AEKSHQE).

It belongs to the INSIG family. Interacts with SCAP; interaction is direct and only takes place in the presence of sterols; it prevents interaction between SCAP and the coat protein complex II (COPII). Associates with the SCAP-SREBP complex (composed of SCAP and SREBF1/SREBP1 or SREBF2/SREBP2); association is mediated via its interaction with SCAP and only takes place in the presence of sterols. Interacts with RNF139. Interacts with RNF145. Post-translationally, phosphorylation at Ser-151 by PCK1 reduces binding to oxysterol, disrupting the interaction between INSIG2 and SCAP, thereby promoting nuclear translocation of SREBP proteins (SREBF1/SREBP1 or SREBF2/SREBP2) and subsequent transcription of downstream lipogenesis-related genes. In terms of processing, polyubiquitinated by AMFR/gp78 at Cys-215 in some tissues such as adipose tissues, undifferentiated myoblasts and liver, leading to its degradation. In differentiated myotubes, Cys-215 oxidation prevents ubiquitination at the same site, resulting in protein stabilization. Oxidized at Cys-215 in differentiated myotubes, preventing ubiquitination at the same site, and resulting in protein stabilization.

It localises to the endoplasmic reticulum membrane. Functionally, oxysterol-binding protein that mediates feedback control of cholesterol synthesis by controlling both endoplasmic reticulum to Golgi transport of SCAP and degradation of HMGCR. Acts as a negative regulator of cholesterol biosynthesis by mediating the retention of the SCAP-SREBP complex in the endoplasmic reticulum, thereby blocking the processing of sterol regulatory element-binding proteins (SREBPs) SREBF1/SREBP1 and SREBF2/SREBP2. Binds oxysterol, including 22-hydroxycholesterol, 24-hydroxycholesterol, 25-hydroxycholesterol and 27-hydroxycholesterol, regulating interaction with SCAP and retention of the SCAP-SREBP complex in the endoplasmic reticulum. In presence of oxysterol, interacts with SCAP, retaining the SCAP-SREBP complex in the endoplasmic reticulum, thereby preventing SCAP from escorting SREBF1/SREBP1 and SREBF2/SREBP2 to the Golgi. Sterol deprivation or phosphorylation by PCK1 reduce oxysterol-binding, disrupting the interaction between INSIG2 and SCAP, thereby promoting Golgi transport of the SCAP-SREBP complex, followed by processing and nuclear translocation of SREBF1/SREBP1 and SREBF2/SREBP2. Also regulates cholesterol synthesis by regulating degradation of HMGCR: initiates the sterol-mediated ubiquitin-mediated endoplasmic reticulum-associated degradation (ERAD) of HMGCR via recruitment of the reductase to the ubiquitin ligase RNF139. The chain is Insulin-induced gene 2 protein from Papio anubis (Olive baboon).